Reading from the N-terminus, the 308-residue chain is Oxygen-dependent coproporphyrinogen-III oxidase (308 aa).

Substrate is bound at residue serine 100. A divalent metal cation contacts are provided by histidine 104 and histidine 114. Histidine 114 serves as the catalytic Proton donor. 116 to 118 is a substrate binding site; sequence NFR. 2 residues coordinate a divalent metal cation: histidine 153 and histidine 183. The segment at 248-283 is important for dimerization; sequence YVEFNLVFDRGTIFGLQSGGRTESILSSMPPMATWK. A substrate-binding site is contributed by 266–268; sequence GGR.

Belongs to the aerobic coproporphyrinogen-III oxidase family. Homodimer. A divalent metal cation is required as a cofactor.

Its subcellular location is the cytoplasm. The enzyme catalyses coproporphyrinogen III + O2 + 2 H(+) = protoporphyrinogen IX + 2 CO2 + 2 H2O. It participates in porphyrin-containing compound metabolism; protoporphyrin-IX biosynthesis; protoporphyrinogen-IX from coproporphyrinogen-III (O2 route): step 1/1. In terms of biological role, involved in the heme biosynthesis. Catalyzes the aerobic oxidative decarboxylation of propionate groups of rings A and B of coproporphyrinogen-III to yield the vinyl groups in protoporphyrinogen-IX. The chain is Oxygen-dependent coproporphyrinogen-III oxidase from Francisella philomiragia subsp. philomiragia (strain ATCC 25017 / CCUG 19701 / FSC 153 / O#319-036).